The following is a 117-amino-acid chain: Large ribosomal subunit protein uL18 (117 aa).

The protein belongs to the universal ribosomal protein uL18 family. Part of the 50S ribosomal subunit; part of the 5S rRNA/L5/L18/L25 subcomplex. Contacts the 5S and 23S rRNAs.

In terms of biological role, this is one of the proteins that bind and probably mediate the attachment of the 5S RNA into the large ribosomal subunit, where it forms part of the central protuberance. This is Large ribosomal subunit protein uL18 from Haemophilus influenzae (strain 86-028NP).